The sequence spans 481 residues: Tetratricopeptide repeat protein 29 (481 aa).

Residues methionine 1–threonine 18 show a composition bias toward low complexity. A disordered region spans residues methionine 1–lysine 53. TPR repeat units lie at residues cysteine 191 to serine 224, glutamine 231 to leucine 264, valine 271 to valine 310, alanine 317 to alanine 350, lysine 357 to alanine 390, and tyrosine 397 to leucine 430.

As to quaternary structure, interacts with TAX-1.

It is found in the cytoplasm. The protein resides in the cytoskeleton. It localises to the flagellum axoneme. Axonemal protein which is implicated in axonemal and/or peri-axonemal structure assembly and regulates flagellum assembly and beating. The polypeptide is Tetratricopeptide repeat protein 29 (Trypanosoma brucei brucei (strain 927/4 GUTat10.1)).